We begin with the raw amino-acid sequence, 129 residues long: Histone H2A.J (129 aa).

The segment at 1–22 (MSGRGKQGGKVRAKAKSRSSRA) is disordered. N-acetylserine is present on S2. Phosphoserine is present on S2. K6 is subject to N6-acetyllysine. A compositionally biased stretch (basic residues) spans 7 to 19 (QGGKVRAKAKSRS). K10 is subject to N6-lactoyllysine; alternate. Residues K14 and K16 each participate in a glycyl lysine isopeptide (Lys-Gly) (interchain with G-Cter in ubiquitin) cross-link. Residue Q105 is modified to N5-methylglutamine. Residue K120 forms a Glycyl lysine isopeptide (Lys-Gly) (interchain with G-Cter in ubiquitin) linkage.

Belongs to the histone H2A family. The nucleosome is a histone octamer containing two molecules each of H2A, H2B, H3 and H4 assembled in one H3-H4 heterotetramer and two H2A-H2B heterodimers. The octamer wraps approximately 147 bp of DNA. Post-translationally, monoubiquitination of Lys-120 (H2AXK119ub) gives a specific tag for epigenetic transcriptional repression. Following DNA double-strand breaks (DSBs), it is ubiquitinated through 'Lys-63' linkage of ubiquitin moieties. In terms of processing, phosphorylation on Ser-2 is enhanced during mitosis. Phosphorylation on Ser-2 directly represses transcription.

Its subcellular location is the nucleus. The protein localises to the chromosome. Core component of nucleosome. Nucleosomes wrap and compact DNA into chromatin, limiting DNA accessibility to the cellular machineries which require DNA as a template. Histones thereby play a central role in transcription regulation, DNA repair, DNA replication and chromosomal stability. DNA accessibility is regulated via a complex set of post-translational modifications of histones, also called histone code, and nucleosome remodeling. This Gallus gallus (Chicken) protein is Histone H2A.J (H2A-IX).